We begin with the raw amino-acid sequence, 586 residues long: MSKTLQSRKSLSGKLRRAANTRIVVEGNLALSIANDLLSALDVEPFNSEEDCISRSPKFGISPDQFRNSYLRAEIMSKYDSFSLGINTEAVAWEKFLAAEAECAKTNLRLYRPNYNEDFNFSLGETCIHMARRKIVKLLGDSVPFEAVLRHCRFSGGATTTNSRLYGHPSFKFALAQECTPRAVPYVQALKACTNMDLGITKVSPFNKAVTVPKNSKTDRCIAIEPGWNMFFQLGIGGVIREKLHLWNIDLNDQTINQVRAYSGSCSNELATVDLSSASDTISLALVELLLPPAWFKVLTDLRSRRGMLPDGRIITYEKISSMGNGFTFELESLIFAALARSLCELLNLQPSSVTVYGDDIILPSDACSSLIEVFSYVGFRTNEKKTFFDGPFRESCGKHYFMGVDVTPFYIRHRIVSPSDLILVLNQMYRWATIDGVWDPRVYPVYTKYRRLLPDILRRNVVPDGYGDGALVGSVLTSPFAENRGWVRRVPMIIDKKKDRVRDERGSYLYELWSLQQLECDSEFPFNGSLVVGTNDGVCTYRHRERVSTAISDSVGAYDIVWIPCSSRVLAPYGDFRRHEGSILK.

A RdRp catalytic domain is found at 259–391; the sequence is VRAYSGSCSN…TNEKKTFFDG (133 aa). 3 residues coordinate Mg(2+): D274, D359, and D360.

As to quaternary structure, homodimer; the replicase complex can dimerize. Part of the viral RNA-dependent RNA polymerase complex, the other subunits are the host ribosomal protein S1, EF-Tu and EF-Ts. S1 is needed for the initiation of genomic RNA (+)-strand replication. The cofactor is Mg(2+).

The catalysed reaction is RNA(n) + a ribonucleoside 5'-triphosphate = RNA(n+1) + diphosphate. This is the catalytic subunit of the viral RNA-dependent RNA polymerase complex. This complex is involved in viral RNA replication that produces (+)-stranded genomes via a complementary, (-)-stranded intermediate. Binds RNA cooperatively with the host ribosomal protein S1. The sequence is that of RNA-directed RNA polymerase subunit beta from Escherichia coli.